Here is a 330-residue protein sequence, read N- to C-terminus: Phosphatidylglycerol--prolipoprotein diacylglyceryl transferase (330 aa).

3 consecutive transmembrane segments (helical) span residues 22–42 (LPIRAYALLIILGIVAALVVG), 57–77 (YDIALWAVPFGLVGGRLYHLA), and 97–117 (IWDGGLGIWGAVALGCVGAWL). Arg145 is an a 1,2-diacyl-sn-glycero-3-phospho-(1'-sn-glycerol) binding site. 2 consecutive transmembrane segments (helical) span residues 193 to 213 (VVQPTFLYELIWNVLVFFALI) and 257 to 277 (INSFTSTFVFIGAVVYIILAP).

It belongs to the Lgt family.

The protein localises to the cell membrane. It catalyses the reaction L-cysteinyl-[prolipoprotein] + a 1,2-diacyl-sn-glycero-3-phospho-(1'-sn-glycerol) = an S-1,2-diacyl-sn-glyceryl-L-cysteinyl-[prolipoprotein] + sn-glycerol 1-phosphate + H(+). The protein operates within protein modification; lipoprotein biosynthesis (diacylglyceryl transfer). Its function is as follows. Catalyzes the transfer of the diacylglyceryl group from phosphatidylglycerol to the sulfhydryl group of the N-terminal cysteine of a prolipoprotein, the first step in the formation of mature lipoproteins. This chain is Phosphatidylglycerol--prolipoprotein diacylglyceryl transferase, found in Mycobacterium leprae (strain Br4923).